The primary structure comprises 901 residues: Putative serine/threonine-protein kinase YPL150W (901 aa).

One can recognise a Protein kinase domain in the interval 41-287; sequence YKILKQIGEG…LSQVLRHPFL (247 aa). ATP contacts are provided by residues 47-55 and K70; that span reads IGEGSFGKV. The active-site Proton acceptor is the D157. Phosphoserine is present on S456. The segment at 500–530 is disordered; it reads APSSGSFLKKNSGSIQKSRTDTVANPSRTES. S533 is subject to Phosphoserine. The segment covering 588-599 has biased composition (low complexity); the sequence is SSISSEISQTST. 2 disordered regions span residues 588–629 and 745–770; these read SSIS…NRPL and TQRP…SSKR. Residues 600–613 are compositionally biased toward polar residues; the sequence is GNYDSESAENSRSI. A compositionally biased stretch (basic residues) spans 759 to 770; that stretch reads RHGKNARRSSKR.

Belongs to the protein kinase superfamily. Ser/Thr protein kinase family.

It catalyses the reaction L-seryl-[protein] + ATP = O-phospho-L-seryl-[protein] + ADP + H(+). The catalysed reaction is L-threonyl-[protein] + ATP = O-phospho-L-threonyl-[protein] + ADP + H(+). Functionally, putative serine/threonine-protein kinase. The polypeptide is Putative serine/threonine-protein kinase YPL150W (Saccharomyces cerevisiae (strain ATCC 204508 / S288c) (Baker's yeast)).